A 63-amino-acid chain; its full sequence is Large ribosomal subunit protein bL28 (63 aa).

The protein belongs to the bacterial ribosomal protein bL28 family.

This chain is Large ribosomal subunit protein bL28, found in Geobacter sulfurreducens (strain ATCC 51573 / DSM 12127 / PCA).